The chain runs to 158 residues: Transcriptional repressor NrdR (158 aa).

The segment at 3 to 34 is a zinc-finger region; it reads CPFCSFPESRVLDSRPADEGNSIRRRRECGEC. The ATP-cone domain maps to 49–139; it reads LVVVKKDGRR…VYRQFGDIYS (91 aa).

The protein belongs to the NrdR family. Zn(2+) is required as a cofactor.

Its function is as follows. Negatively regulates transcription of bacterial ribonucleotide reductase nrd genes and operons by binding to NrdR-boxes. This chain is Transcriptional repressor NrdR, found in Desulforamulus reducens (strain ATCC BAA-1160 / DSM 100696 / MI-1) (Desulfotomaculum reducens).